Consider the following 1026-residue polypeptide: Unconventional myosin-Ic (1026 aa).

Methionine 1 is subject to N-acetylmethionine. A Myosin motor domain is found at 12-695 (GVQDFLLLEN…TLFITEDALE (684 aa)). ATP is bound by residues asparagine 53, tyrosine 61, 104-113 (SGESGAGKTE), and 157-161 (NDNSS). Position 349 is an N6-methyllysine (lysine 349). Residues 572-594 (LAKLMDILMSKEPSYVRCIKPND) form an actin-binding region. 2 IQ domains span residues 698–727 (KQTIAVTLQKSWRGYRERANYHRIRHAVIV) and 721–750 (IRHAVIVIQSWWRGVKGRRKAKHRRQAADT). One can recognise a TH1 domain in the interval 849-1024 (KDGYSRSVPK…NGHLSVTTPR (176 aa)).

Belongs to the TRAFAC class myosin-kinesin ATPase superfamily. Myosin family. As to quaternary structure, interacts (via its IQ motifs) with calm.

It localises to the cytoplasm. The protein localises to the cell cortex. It is found in the cell projection. Its subcellular location is the ruffle membrane. The protein resides in the cytoplasmic vesicle. It localises to the stereocilium membrane. Its function is as follows. Myosins are actin-based motor molecules with ATPase activity. Unconventional myosins serve in intracellular movements. Their highly divergent tails are presumed to bind to membranous compartments, which would be moved relative to actin filaments. The protein is Unconventional myosin-Ic (myo1c) of Danio rerio (Zebrafish).